The primary structure comprises 444 residues: Methylenetetrahydrofolate--tRNA-(uracil-5-)-methyltransferase TrmFO (444 aa).

10 to 15 contacts FAD; sequence GAGLAG.

This sequence belongs to the MnmG family. TrmFO subfamily. FAD serves as cofactor.

The protein localises to the cytoplasm. The enzyme catalyses uridine(54) in tRNA + (6R)-5,10-methylene-5,6,7,8-tetrahydrofolate + NADH + H(+) = 5-methyluridine(54) in tRNA + (6S)-5,6,7,8-tetrahydrofolate + NAD(+). The catalysed reaction is uridine(54) in tRNA + (6R)-5,10-methylene-5,6,7,8-tetrahydrofolate + NADPH + H(+) = 5-methyluridine(54) in tRNA + (6S)-5,6,7,8-tetrahydrofolate + NADP(+). Functionally, catalyzes the folate-dependent formation of 5-methyl-uridine at position 54 (M-5-U54) in all tRNAs. This is Methylenetetrahydrofolate--tRNA-(uracil-5-)-methyltransferase TrmFO from Streptococcus suis (strain 98HAH33).